The chain runs to 448 residues: tRNA(Ile)-lysidine synthase (448 aa).

Residue 25-30 coordinates ATP; the sequence is SGGSDS.

It belongs to the tRNA(Ile)-lysidine synthase family.

Its subcellular location is the cytoplasm. The catalysed reaction is cytidine(34) in tRNA(Ile2) + L-lysine + ATP = lysidine(34) in tRNA(Ile2) + AMP + diphosphate + H(+). Ligates lysine onto the cytidine present at position 34 of the AUA codon-specific tRNA(Ile) that contains the anticodon CAU, in an ATP-dependent manner. Cytidine is converted to lysidine, thus changing the amino acid specificity of the tRNA from methionine to isoleucine. This Brucella suis biovar 1 (strain 1330) protein is tRNA(Ile)-lysidine synthase.